Here is a 788-residue protein sequence, read N- to C-terminus: ATP-dependent 6-phosphofructokinase, platelet type (788 aa).

N-acetylmethionine is present on Met1. An N-terminal catalytic PFK domain 1 region spans residues Met1 to Ile399. Ser2, Ser6, Ser12, and Ser21 each carry phosphoserine. Residues Gly34, Arg97 to Cys98, and Gly127 to Ser130 each bind ATP. Residue Asp128 participates in Mg(2+) binding. Ser142 is modified (phosphoserine). Substrate contacts are provided by residues Ser173 to Asp175, Arg210, Met217 to Arg219, Glu273, Arg301, and His307 to Arg310. The Proton acceptor role is filled by Asp175. Phosphoserine is present on Ser386. Lys395 carries the N6-acetyllysine modification. The interval Lys400 to Cys411 is interdomain linker. The tract at residues Asn412–Ile788 is C-terminal regulatory PFK domain 2. Residue Arg481 participates in beta-D-fructose 2,6-bisphosphate binding. Lys486 is modified (N6-acetyllysine). Beta-D-fructose 2,6-bisphosphate is bound by residues Thr538 to Asn542, Arg576, Met583 to Gly585, and Glu639. Ser540 carries an O-linked (GlcNAc) serine glycan. A Phosphotyrosine modification is found at Tyr651. Residues Arg665 and His671 to Gln674 contribute to the beta-D-fructose 2,6-bisphosphate site. Lys688 carries the post-translational modification N6-acetyllysine. Residue Arg744 coordinates beta-D-fructose 2,6-bisphosphate.

The protein belongs to the phosphofructokinase type A (PFKA) family. ATP-dependent PFK group I subfamily. Eukaryotic two domain clade 'E' sub-subfamily. As to quaternary structure, homo- and heterotetramers. Phosphofructokinase (PFK) enzyme functions as a tetramer composed of different combinations of 3 types of subunits, called PFKM (M), PFKL (L) and PFKP (P). The composition of the PFK tetramer differs according to the tissue type it is present in. The kinetic and regulatory properties of the tetrameric enzyme are dependent on the subunit composition, hence can vary across tissues. Interacts with ATG4B; promoting phosphorylation of ATG4B. It depends on Mg(2+) as a cofactor. Post-translationally, glcNAcylation decreases enzyme activity. In terms of processing, phosphorylation at Ser-386 promotes interaction with ATG4B. In terms of tissue distribution, expressed at high level in neuroendocrine tissues.

The protein localises to the cytoplasm. The catalysed reaction is beta-D-fructose 6-phosphate + ATP = beta-D-fructose 1,6-bisphosphate + ADP + H(+). Its pathway is carbohydrate degradation; glycolysis; D-glyceraldehyde 3-phosphate and glycerone phosphate from D-glucose: step 3/4. With respect to regulation, allosterically activated by ADP, AMP, or fructose 2,6-bisphosphate, and allosterically inhibited by ATP or citrate. In terms of biological role, catalyzes the phosphorylation of D-fructose 6-phosphate to fructose 1,6-bisphosphate by ATP, the first committing step of glycolysis. This is ATP-dependent 6-phosphofructokinase, platelet type (Pfkp) from Rattus norvegicus (Rat).